The chain runs to 386 residues: Probable family 17 glucosidase SCW4 (386 aa).

Positions 1–19 (MRLSNLIASASLLSAATLA) are cleaved as a signal peptide. Positions 20 to 30 (APANHEHKDKR) are excised as a propeptide. The disordered stretch occupies residues 88–127 (ENNSQVSAAASPASSSAATSTQSSSSSQASSSSSSGEDVS). Asn89 is a glycosylation site (N-linked (GlcNAc...) asparagine). The Nucleophile role is filled by Glu323.

It belongs to the glycosyl hydrolase 17 family. Post-translationally, N-glycosylated.

It localises to the secreted. The protein localises to the cell wall. Functionally, glucanases possibly play a role in cell expansion during growth, in cell-cell fusion during mating, and in spore release during sporulation. The protein is Probable family 17 glucosidase SCW4 (SCW4) of Saccharomyces cerevisiae (strain ATCC 204508 / S288c) (Baker's yeast).